We begin with the raw amino-acid sequence, 246 residues long: Small ribosomal subunit protein uS2c (246 aa).

It belongs to the universal ribosomal protein uS2 family.

It is found in the plastid. The protein localises to the chloroplast. The polypeptide is Small ribosomal subunit protein uS2c (rps2) (Pelargonium hortorum (Common geranium)).